Consider the following 252-residue polypeptide: uncharacterized protein (252 aa).

Its subcellular location is the plastid. It is found in the chloroplast. This is an uncharacterized protein from Guillardia theta (Cryptophyte).